Reading from the N-terminus, the 175-residue chain is Translation initiation factor IF-3 (175 aa).

The protein belongs to the IF-3 family. As to quaternary structure, monomer.

It is found in the cytoplasm. Its function is as follows. IF-3 binds to the 30S ribosomal subunit and shifts the equilibrium between 70S ribosomes and their 50S and 30S subunits in favor of the free subunits, thus enhancing the availability of 30S subunits on which protein synthesis initiation begins. In Chromobacterium violaceum (strain ATCC 12472 / DSM 30191 / JCM 1249 / CCUG 213 / NBRC 12614 / NCIMB 9131 / NCTC 9757 / MK), this protein is Translation initiation factor IF-3.